The chain runs to 253 residues: MAIDGWTVALQAVNFLILVLLLRHFLYRPVLAMIDRRKAEATRLLDDAALRVEAAKAERQKAETLRADLEAQADALLADSRARAGKELEELRTRARREADGILAEGRKALAEERRAAEADLRGKAAGLAVEIAGRLLAAATPGARVEPFLDRVCTRLTALPEPERQVLAGQAADGGIRIVTAVPLDEAGRAHCRDRAHTLLGPDIALTFADDPELLAGVELHFAHTVIRDSWRDLLGRIGLELDGHDDAHRIA.

A helical membrane pass occupies residues 5–27 (GWTVALQAVNFLILVLLLRHFLY).

Belongs to the ATPase B chain family. In terms of assembly, F-type ATPases have 2 components, F(1) - the catalytic core - and F(0) - the membrane proton channel. F(1) has five subunits: alpha(3), beta(3), gamma(1), delta(1), epsilon(1). F(0) has three main subunits: a(1), b(2) and c(10-14). The alpha and beta chains form an alternating ring which encloses part of the gamma chain. F(1) is attached to F(0) by a central stalk formed by the gamma and epsilon chains, while a peripheral stalk is formed by the delta and b chains.

The protein localises to the cell inner membrane. In terms of biological role, f(1)F(0) ATP synthase produces ATP from ADP in the presence of a proton or sodium gradient. F-type ATPases consist of two structural domains, F(1) containing the extramembraneous catalytic core and F(0) containing the membrane proton channel, linked together by a central stalk and a peripheral stalk. During catalysis, ATP synthesis in the catalytic domain of F(1) is coupled via a rotary mechanism of the central stalk subunits to proton translocation. Functionally, component of the F(0) channel, it forms part of the peripheral stalk, linking F(1) to F(0). The polypeptide is ATP synthase subunit b 1 (Rhodospirillum centenum (strain ATCC 51521 / SW)).